The following is a 308-amino-acid chain: Ribosomal RNA large subunit methyltransferase F (308 aa).

This sequence belongs to the methyltransferase superfamily. METTL16/RlmF family.

It localises to the cytoplasm. It carries out the reaction adenosine(1618) in 23S rRNA + S-adenosyl-L-methionine = N(6)-methyladenosine(1618) in 23S rRNA + S-adenosyl-L-homocysteine + H(+). Functionally, specifically methylates the adenine in position 1618 of 23S rRNA. This Salmonella schwarzengrund (strain CVM19633) protein is Ribosomal RNA large subunit methyltransferase F.